We begin with the raw amino-acid sequence, 289 residues long: 4-diphosphocytidyl-2-C-methyl-D-erythritol kinase (289 aa).

K10 is a catalytic residue. Residue 94 to 104 participates in ATP binding; that stretch reads PVAAGLAGGSS. The active site involves D136.

This sequence belongs to the GHMP kinase family. IspE subfamily.

It catalyses the reaction 4-CDP-2-C-methyl-D-erythritol + ATP = 4-CDP-2-C-methyl-D-erythritol 2-phosphate + ADP + H(+). It participates in isoprenoid biosynthesis; isopentenyl diphosphate biosynthesis via DXP pathway; isopentenyl diphosphate from 1-deoxy-D-xylulose 5-phosphate: step 3/6. In terms of biological role, catalyzes the phosphorylation of the position 2 hydroxy group of 4-diphosphocytidyl-2C-methyl-D-erythritol. This chain is 4-diphosphocytidyl-2-C-methyl-D-erythritol kinase, found in Bacillus cytotoxicus (strain DSM 22905 / CIP 110041 / 391-98 / NVH 391-98).